The chain runs to 509 residues: MGGSSRARWVALGLGALGLLFAALGVVMILMVPSLIKQQVLKNVRIDPSSLSFGMWKEIPVPFYLSVYFFEVVNPNEVLNGQKPVVRERGPYVYREFRQKVNITFNDNDTVSFVENRSLHFQPDKSHGSESDYIVLPNILVLGGSILMESKPVSLKLMMTLALVTMGQRAFMNRTVGEILWGYDDPFVHFLNTYLPDMLPIKGKFGLFVGMNNSNSGVFTVFTGVQNFSRIHLVDKWNGLSKIDYWHSEQCNMINGTSGQMWAPFMTPESSLEFFSPEACRSMKLTYNESRVFEGIPTYRFTAPDTLFANGSVYPPNEGFCPCRESGIQNVSTCRFGAPLFLSHPHFYNADPVLSEAVLGLNPNPKEHSLFLDIHPVTGIPMNCSVKMQLSLYIKSVKGIGQTGKIEPVVLPLLWFEQSGAMGGKPLSTFYTQLVLMPQVLHYAQYVLLGLGGLLLLVPIICQLRSQEKCFLFWSGSKKGSQDKEAIQAYSESLMSPAAKGTVLQEAKL.

Over 1-11 the chain is Cytoplasmic; sequence MGGSSRARWVA. Residues 12–32 traverse the membrane as a helical segment; sequence LGLGALGLLFAALGVVMILMV. At 33–440 the chain is on the extracellular side; the sequence is PSLIKQQVLK…YTQLVLMPQV (408 aa). N-linked (GlcNAc...) asparagine glycosylation is found at Asn-102, Asn-108, Asn-116, Asn-173, Asn-212, Asn-227, Asn-255, Asn-288, Asn-310, Asn-330, and Asn-383. A disulfide bond links Cys-251 and Cys-384. Residues 441–461 traverse the membrane as a helical segment; the sequence is LHYAQYVLLGLGGLLLLVPII. Cys-462 carries S-palmitoyl cysteine lipidation. At 462–509 the chain is on the cytoplasmic side; that stretch reads CQLRSQEKCFLFWSGSKKGSQDKEAIQAYSESLMSPAAKGTVLQEAKL.

It belongs to the CD36 family. As to quaternary structure, the C-terminal region binds to PDZK1. N-glycosylated. In terms of processing, the six cysteines of the extracellular domain are all involved in intramolecular disulfide bonds. In terms of tissue distribution, expressed primarily in liver, ovary and adrenal gland, and, at lower levels in other non-placental steroidogenic tissues, including adipose tissue, mammary gland and testis (at protein level). Isoform 2 is expressed at lower levels than isoform 1 in liver, testis and adrenal gland. At the mRNA, but not at the protein level, isoform 2 is the predominant isoform in testis (80%).

It is found in the cell membrane. It localises to the membrane. The protein localises to the caveola. In terms of biological role, receptor for different ligands such as phospholipids, cholesterol ester, lipoproteins, phosphatidylserine and apoptotic cells. Both isoform 1 and isoform 2 act as receptors for HDL, mediating selective uptake of cholesteryl ether and HDL-dependent cholesterol efflux. Also facilitates the flux of free and esterified cholesterol between the cell surface and apoB-containing lipoproteins and modified lipoproteins, although less efficiently than HDL. May be involved in the phagocytosis of apoptotic cells, via its phosphatidylserine binding activity. The protein is Scavenger receptor class B member 1 (Scarb1) of Mus musculus (Mouse).